Consider the following 1938-residue polypeptide: Myosin heavy chain, striated muscle (1938 aa).

A Myosin N-terminal SH3-like domain is found at 29 to 79 (DGKKNCWVPDEKEGFASAEIQSSKGDEITVKIVADSSTRTVKKDDIQSMNP). One can recognise a Myosin motor domain in the interval 83–775 (EKLEDMANMT…VLGNLEEMRD (693 aa)). An ATP-binding site is contributed by 176–183 (GESGAGKT). The segment at 653–675 (LNKLMKNLYSTHPHFVRCIIPNE) is actin-binding. The region spanning 778–805 (LSKIISMFQAHIRGYLIRKAYKKLQDQR) is the IQ domain. The segment at 836 to 1938 (LLSIARQEEE…RSSVSVSASN (1103 aa)) is rodlike tail (S2 and LMM domains). A coiled-coil region spans residues 836-1938 (LLSIARQEEE…RSSVSVSASN (1103 aa)). 2 stretches are compositionally biased toward basic and acidic residues: residues 1041–1058 (VRGD…DLKS) and 1212–1225 (SKLE…KREM). 4 disordered regions span residues 1041–1062 (VRGD…TQEN), 1187–1332 (SALR…EVRN), 1344–1363 (LEEE…KANN), and 1898–1938 (HELE…SASN). Positions 1265 to 1285 (RSINELQSQKSRLQAENSDLT) are enriched in polar residues. 3 stretches are compositionally biased toward basic and acidic residues: residues 1286–1303 (RQLE…KEKS), 1310–1332 (EDAR…EVRN), and 1344–1354 (LEEEQESKSDV). The segment covering 1922–1938 (RSSVSVQRSSVSVSASN) has biased composition (low complexity).

It belongs to the TRAFAC class myosin-kinesin ATPase superfamily. Myosin family. As to quaternary structure, muscle myosin is a hexameric protein that consists of 2 heavy chain subunits (MHC), 2 alkali light chain subunits (MLC) and 2 regulatory light chain subunits (MLC-2).

It localises to the cytoplasm. The protein localises to the myofibril. Muscle contraction. Its function is as follows. Myosin is a protein that binds to F-actin and has ATPase activity that is activated by F-actin. This Argopecten irradians (Bay scallop) protein is Myosin heavy chain, striated muscle.